Consider the following 90-residue polypeptide: Secretoglobin family 1D member 2 (90 aa).

Positions 1–21 (MKLSVCLLLVTLALCCYQANA) are cleaved as a signal peptide.

This sequence belongs to the secretoglobin family. Lipophilin subfamily. Highest expression was found in skeletal muscle. Expressed as well in thymus, trachea, kidney, steroid responsive tissues (prostate, testis, uterus, breast and ovary) and salivary gland.

It localises to the secreted. In terms of biological role, may bind androgens and other steroids, may also bind estramustine, a chemotherapeutic agent used for prostate cancer. May be under transcriptional regulation of steroid hormones. The protein is Secretoglobin family 1D member 2 (SCGB1D2) of Homo sapiens (Human).